Here is a 357-residue protein sequence, read N- to C-terminus: GTPase Obg (357 aa).

One can recognise an Obg domain in the interval methionine 1–leucine 159. One can recognise an OBG-type G domain in the interval alanine 160–arginine 334. Residues glycine 166 to serine 173, phenylalanine 191 to histidine 195, aspartate 213 to glycine 216, asparagine 284 to aspartate 287, and serine 315 to leucine 317 each bind GTP. Serine 173 and threonine 193 together coordinate Mg(2+).

It belongs to the TRAFAC class OBG-HflX-like GTPase superfamily. OBG GTPase family. As to quaternary structure, monomer. Mg(2+) serves as cofactor.

It is found in the cytoplasm. Its function is as follows. An essential GTPase which binds GTP, GDP and possibly (p)ppGpp with moderate affinity, with high nucleotide exchange rates and a fairly low GTP hydrolysis rate. Plays a role in control of the cell cycle, stress response, ribosome biogenesis and in those bacteria that undergo differentiation, in morphogenesis control. This Paracidovorax citrulli (strain AAC00-1) (Acidovorax citrulli) protein is GTPase Obg.